A 138-amino-acid polypeptide reads, in one-letter code: Ribosome-binding factor A (138 aa).

The disordered stretch occupies residues 112 to 138; the sequence is EARTQGQAPAADVEPAPGAAPDDEAEE. Positions 119–131 are enriched in low complexity; it reads APAADVEPAPGAA.

The protein belongs to the RbfA family. As to quaternary structure, monomer. Binds 30S ribosomal subunits, but not 50S ribosomal subunits or 70S ribosomes.

It localises to the cytoplasm. One of several proteins that assist in the late maturation steps of the functional core of the 30S ribosomal subunit. Associates with free 30S ribosomal subunits (but not with 30S subunits that are part of 70S ribosomes or polysomes). Required for efficient processing of 16S rRNA. May interact with the 5'-terminal helix region of 16S rRNA. The sequence is that of Ribosome-binding factor A from Anaeromyxobacter sp. (strain K).